The following is a 1055-amino-acid chain: MASLEEPLAPRPQGPLPAAGDEPGCGPGKLRPEPRLSAAGGGSAAGPGPAPEWPGRGRAERAAPPRPPLSSAGRPSPAGGPGALSARGGGCGWVAARAPLALAFSSRVPSSSPSFFYFWPPPPPPPPSFLPSSSAFHLPVRLPGREGAAAAAAAGGGGDAGGGGGGGQEAAPLSVPTSSSHRGGGGSGGGRRRLFLSPALQGLLLPARAGPRPPPPPRLPLGQAARRAGSPGFPGAGPGGGGQTPRRPQGASFALAAAAALLFGSDMEDGPSNNASCFRRLTECFLSPSLTDEKVKAYLSLHPQVLDEFVSESVSAETVEKWLKRKNNKSEDESAPKEVSRYQDTNMQGVVYELNSYIEQRLDTGGDNQLLLYELSSIIKIATKADGFALYFLGECNNSLCIFTPPGIKEGKPRLIPAGPITQGTTVSAYVAKSRKTLLVEDILGDERFPRGTGLESGTRIQSVLCLPIVTAIGDLIGILELYRHWGKEAFCLSHQEVATANLAWASVAIHQVQVCRGLAKQTELNDFLLDVSKTYFDNIVAIDSLLEHIMIYAKNLVNADRCALFQVDHKNKELYSDLFDIGEEKEGKPVFKKTKEIRFSIEKGIAGQVARTGEVLNIPDAYADPRFNREVDLYTGYTTRNILCMPIVSRGSVIGVVQMVNKISGSAFSKTDENNFKMFAVFCALALHCANMYHRIRHSECIYRVTMEKLSYHSICTSEEWQGLMQFTLPVRLCKEIELFHFDIGPFENMWPGIFVYMVHRSCGTSCFELEKLCRFIMSVKKNYRRVPYHNWKHAVTVAHCMYAILQNNHTLFTDLERKGLLIACLCHDLDHRGFSNSYLQKFDHPLAALYSTSTMEQHHFSQTVSILQLEGHNIFSTLSSSEYEQVLEIIRKAIIATDLALYFGNRKQLEEMYQTGSLNLNNQSHRDRVIGLMMTACDLCSVTKLWPVTKLTANDIYAEFWAEGDEMKKLGIQPIPMMDRDKKDEVPQGQLGFYNAVAIPCYTTLTQILPPTEPLLKACRDNLSQWEKVIRGEETATWISSPSVAQKAAASED.

3 disordered regions span residues 1 to 90 (MASL…RGGG), 151 to 193 (AAAA…GRRR), and 205 to 250 (LPAR…RPQG). 2 stretches are compositionally biased toward gly residues: residues 79–90 (GGPGALSARGGG) and 154–168 (AGGG…GGGQ). The segment covering 220–231 (PLGQAARRAGSP) has biased composition (low complexity). Over residues 232–243 (GFPGAGPGGGGQ) the composition is skewed to gly residues. A Phosphothreonine modification is found at T282. GAF domains lie at 367–510 (DNQL…SVAI) and 542–688 (AIDS…ALAL). 3',5'-cyclic AMP is bound by residues 562-563 (RC), 606-607 (IA), T640, Q659, and H791. The 318-residue stretch at 718–1035 (TSEEWQGLMQ…SQWEKVIRGE (318 aa)) folds into the PDEase domain. Residue H791 is the Proton donor of the active site. H791 serves as a coordination point for 3',5'-cyclic GMP. H795, H829, D830, and D940 together coordinate a divalent metal cation. 3',5'-cyclic AMP is bound at residue Q992. A 3',5'-cyclic GMP-binding site is contributed by Q992.

Belongs to the cyclic nucleotide phosphodiesterase family. Homodimer. The cofactor is a divalent metal cation. In terms of processing, phosphorylated on Thr-16. As to expression, abundant in the putamen and caudate nucleus regions of brain and testis, moderately expressed in the thyroid gland, pituitary gland, thalamus and cerebellum.

The protein resides in the cytoplasm. Its subcellular location is the cytosol. The catalysed reaction is a nucleoside 3',5'-cyclic phosphate + H2O = a nucleoside 5'-phosphate + H(+). It carries out the reaction 3',5'-cyclic AMP + H2O = AMP + H(+). The enzyme catalyses 3',5'-cyclic GMP + H2O = GMP + H(+). The protein operates within purine metabolism; 3',5'-cyclic AMP degradation; AMP from 3',5'-cyclic AMP: step 1/1. It participates in purine metabolism; 3',5'-cyclic GMP degradation; GMP from 3',5'-cyclic GMP: step 1/1. With respect to regulation, inhibited by dipyridamole and moderately by IBMX. cGMP acts as an allosteric activator. Plays a role in signal transduction by regulating the intracellular concentration of cyclic nucleotides. Can hydrolyze both cAMP and cGMP, but has higher affinity for cAMP and is more efficient with cAMP as substrate. May play a critical role in regulating cAMP and cGMP levels in the striatum, a region of the brain that contributes to the control of movement and cognition. The sequence is that of cAMP and cAMP-inhibited cGMP 3',5'-cyclic phosphodiesterase 10A (PDE10A) from Homo sapiens (Human).